Here is a 441-residue protein sequence, read N- to C-terminus: MGKPVVAVVGRPNVGKSTFFNYLAGSRISIVEDTPGVTRDRIYTEIEWRNTKFTLIDTGGIEPYSEDIIMQQMKRQAEIAIETADVIIFMVDAKDGMTATDKEVATMLRKSQKPVVLCVNKVDRVGDPPPDVYEFYNLGMGEMQIISSVHGLGIGDLLDEVFEHFPEDIASEEEEDVIKVAVVGKPNAGKSSLINSILGENRVIVSNIPGTTRDAIDTHVEKDGQKYTFIDTAGIRRRSKISENIEKYSTIRSWTAVERADVCLIMIDAEDGVTEQDTKIAGYAHQQGKASIIVINKWDLIEKQTGTLEEYRKVVHEKLGFMTYAPVLFISAKTGQRVIKIYELIKFVADQAAFRISTGMLNDLVSEAVAMVQPPSDKGKRLKIYYMTQIGVKPPSFVVFVNDVELFHYSYERYLENQLRKNFGFEGTPIRFIHRQREKEN.

EngA-type G domains are found at residues Pro4–Ile169 and Ile178–Ala353. Residues Gly10 to Ser17, Asp57 to Ile61, Asn120 to Asp123, Gly184 to Ser191, Asp231 to Ile235, and Asn296 to Asp299 contribute to the GTP site. The KH-like domain occupies Phe354 to Glu438.

This sequence belongs to the TRAFAC class TrmE-Era-EngA-EngB-Septin-like GTPase superfamily. EngA (Der) GTPase family. Associates with the 50S ribosomal subunit.

In terms of biological role, GTPase that plays an essential role in the late steps of ribosome biogenesis. The polypeptide is GTPase Der (Ruminiclostridium cellulolyticum (strain ATCC 35319 / DSM 5812 / JCM 6584 / H10) (Clostridium cellulolyticum)).